Reading from the N-terminus, the 162-residue chain is Ribonuclease H (162 aa).

The region spanning 1 to 141 (MKRIEIFTDG…ADALARAGMA (141 aa)) is the RNase H type-1 domain. Mg(2+)-binding residues include D9, E47, D69, and D133. The interval 139–162 (GMAPFKKKKGGDTASSEEGSARRR) is disordered.

Belongs to the RNase H family. In terms of assembly, monomer. Mg(2+) serves as cofactor.

The protein localises to the cytoplasm. It carries out the reaction Endonucleolytic cleavage to 5'-phosphomonoester.. Endonuclease that specifically degrades the RNA of RNA-DNA hybrids. This Chelativorans sp. (strain BNC1) protein is Ribonuclease H.